A 544-amino-acid chain; its full sequence is Chaperonin GroEL (544 aa).

ATP-binding positions include 30–33, Lys-51, 87–91, Gly-415, 479–481, and Asp-495; these read TLGP, DGTTT, and NAA.

The protein belongs to the chaperonin (HSP60) family. In terms of assembly, forms a cylinder of 14 subunits composed of two heptameric rings stacked back-to-back. Interacts with the co-chaperonin GroES.

It localises to the cytoplasm. The catalysed reaction is ATP + H2O + a folded polypeptide = ADP + phosphate + an unfolded polypeptide.. In terms of biological role, together with its co-chaperonin GroES, plays an essential role in assisting protein folding. The GroEL-GroES system forms a nano-cage that allows encapsulation of the non-native substrate proteins and provides a physical environment optimized to promote and accelerate protein folding. This Acinetobacter baumannii (strain AB307-0294) protein is Chaperonin GroEL.